The primary structure comprises 354 residues: MGCAMSAEERAALARSKQIEKNLKEDGLQAAKDIKLLLLGAGESGKSTIVKQMKIIHESGFTAEDFKQYRPVVYSNTIQSLVAILRAMPNLGISFCNNERETDAKMVFDVIQRMEDTEPFSEELLAAMKRLWADSGVQECFGRSNEYQLNDSAKYFLDDLDRLGAKDYQPTEQDILRTRVKTTGIVEVHFSFKNLNFKLFDVGGQRSERKKWIHCFEDVTAIIFCVAMSEYDQVLHEDETTNRMQESLKLFDSICNNKWFTDTSIILFLNKKDLFEEKIKKSPLTICFPEYAGAQEYGEAAAYIQAQFEAKNKSTTKEIYCHMTCATDTNNIQFVFDAVTDVIIANNLRGCGLY.

Glycine 2 carries N-myristoyl glycine lipidation. Cysteine 3 carries the S-palmitoyl cysteine lipid modification. The G-alpha domain occupies 32 to 354 (KDIKLLLLGA…ANNLRGCGLY (323 aa)). A G1 motif region spans residues 35-48 (KLLLLGAGESGKST). GTP is bound by residues 40–47 (GAGESGKS), 176–182 (LRTRVKT), 201–205 (DVGGQ), 270–273 (NKKD), and alanine 326. Mg(2+) contacts are provided by serine 47 and threonine 182. Residues 174-182 (DILRTRVKT) are G2 motif. The segment at 197-206 (FKLFDVGGQR) is G3 motif. The interval 266-273 (ILFLNKKD) is G4 motif. The interval 324 to 329 (TCATDT) is G5 motif.

The protein belongs to the G-alpha family. G(i/o/t/z) subfamily. In terms of assembly, g proteins are composed of 3 units; alpha, beta and gamma. The alpha chain contains the guanine nucleotide binding site.

Functionally, guanine nucleotide-binding proteins (G proteins) are involved as modulators or transducers in various transmembrane signaling systems. The G(o) protein function is not clear. This Locusta migratoria (Migratory locust) protein is Guanine nucleotide-binding protein G(o) subunit alpha.